We begin with the raw amino-acid sequence, 24 residues long: Humanin-like 11 (24 aa).

The protein belongs to the humanin family.

It is found in the secreted. Its subcellular location is the cytoplasm. Functionally, plays a role as a neuroprotective and antiapoptotic factor. The protein is Humanin-like 11 of Homo sapiens (Human).